Reading from the N-terminus, the 600-residue chain is Isocitrate dehydrogenase kinase/phosphatase (600 aa).

Residues Ala335–Met341 and Lys356 each bind ATP. Asp390 is a catalytic residue.

This sequence belongs to the AceK family.

The protein localises to the cytoplasm. The catalysed reaction is L-seryl-[isocitrate dehydrogenase] + ATP = O-phospho-L-seryl-[isocitrate dehydrogenase] + ADP + H(+). Bifunctional enzyme which can phosphorylate or dephosphorylate isocitrate dehydrogenase (IDH) on a specific serine residue. This is a regulatory mechanism which enables bacteria to bypass the Krebs cycle via the glyoxylate shunt in response to the source of carbon. When bacteria are grown on glucose, IDH is fully active and unphosphorylated, but when grown on acetate or ethanol, the activity of IDH declines drastically concomitant with its phosphorylation. The chain is Isocitrate dehydrogenase kinase/phosphatase from Bordetella parapertussis (strain 12822 / ATCC BAA-587 / NCTC 13253).